Here is a 185-residue protein sequence, read N- to C-terminus: Elongation factor P (185 aa).

It belongs to the elongation factor P family.

It localises to the cytoplasm. Its pathway is protein biosynthesis; polypeptide chain elongation. In terms of biological role, involved in peptide bond synthesis. Stimulates efficient translation and peptide-bond synthesis on native or reconstituted 70S ribosomes in vitro. Probably functions indirectly by altering the affinity of the ribosome for aminoacyl-tRNA, thus increasing their reactivity as acceptors for peptidyl transferase. This is Elongation factor P from Dictyoglomus turgidum (strain DSM 6724 / Z-1310).